A 735-amino-acid chain; its full sequence is Phosphoribosylformylglycinamidine synthase subunit PurL (735 aa).

Residue histidine 48 is part of the active site. ATP is bound by residues tyrosine 51 and lysine 90. Glutamate 92 is a binding site for Mg(2+). Residues 93 to 96 and arginine 115 each bind substrate; that span reads SHNH. The active-site Proton acceptor is histidine 94. Residue aspartate 116 coordinates Mg(2+). Substrate is bound at residue glutamine 239. Residue aspartate 267 coordinates Mg(2+). Residue 311–313 participates in substrate binding; sequence ESQ. The ATP site is built by aspartate 492 and glycine 529. Residue asparagine 530 participates in Mg(2+) binding. A substrate-binding site is contributed by serine 532.

The protein belongs to the FGAMS family. In terms of assembly, monomer. Part of the FGAM synthase complex composed of 1 PurL, 1 PurQ and 2 PurS subunits.

The protein localises to the cytoplasm. It catalyses the reaction N(2)-formyl-N(1)-(5-phospho-beta-D-ribosyl)glycinamide + L-glutamine + ATP + H2O = 2-formamido-N(1)-(5-O-phospho-beta-D-ribosyl)acetamidine + L-glutamate + ADP + phosphate + H(+). Its pathway is purine metabolism; IMP biosynthesis via de novo pathway; 5-amino-1-(5-phospho-D-ribosyl)imidazole from N(2)-formyl-N(1)-(5-phospho-D-ribosyl)glycinamide: step 1/2. Its function is as follows. Part of the phosphoribosylformylglycinamidine synthase complex involved in the purines biosynthetic pathway. Catalyzes the ATP-dependent conversion of formylglycinamide ribonucleotide (FGAR) and glutamine to yield formylglycinamidine ribonucleotide (FGAM) and glutamate. The FGAM synthase complex is composed of three subunits. PurQ produces an ammonia molecule by converting glutamine to glutamate. PurL transfers the ammonia molecule to FGAR to form FGAM in an ATP-dependent manner. PurS interacts with PurQ and PurL and is thought to assist in the transfer of the ammonia molecule from PurQ to PurL. The sequence is that of Phosphoribosylformylglycinamidine synthase subunit PurL from Bradyrhizobium sp. (strain BTAi1 / ATCC BAA-1182).